A 274-amino-acid polypeptide reads, in one-letter code: Undecaprenyl-diphosphatase (274 aa).

6 helical membrane-spanning segments follow: residues 44-64 (AKVFDIAIQTGAIFAVILVYW), 85-105 (LNVVIGFLPAVVLGLLFGKMI), 109-129 (LFIPVVVASTFIIGGFIILWA), 185-205 (ATDFSFFLAIPTLIGAGAYSL), 214-234 (VADIPLFSVGLVFSFISAWLC), and 247-267 (FIPFAWYRIAFGIVVLATAWT).

This sequence belongs to the UppP family.

It is found in the cell inner membrane. The enzyme catalyses di-trans,octa-cis-undecaprenyl diphosphate + H2O = di-trans,octa-cis-undecaprenyl phosphate + phosphate + H(+). Catalyzes the dephosphorylation of undecaprenyl diphosphate (UPP). Confers resistance to bacitracin. The polypeptide is Undecaprenyl-diphosphatase (Variovorax paradoxus (strain S110)).